Consider the following 1024-residue polypeptide: Protein sumv-1 (1024 aa).

Disordered stretches follow at residues 447–486 (DASQ…KKMP), 501–564 (NFQG…RRGV), 577–617 (PSRH…RSQA), 645–664 (SQMA…GSPQ), 710–739 (VRSG…DTVQ), and 773–1024 (AGNS…EEEL). 3 stretches are compositionally biased toward polar residues: residues 467–486 (SFGT…KKMP), 501–514 (NFQG…SSAT), and 528–542 (RSQQ…QTQD). A compositionally biased stretch (low complexity) spans 584-600 (SPLTPSTSTSSSQLLAP). Residues 605 to 617 (QPGTSSQTFRSQA) are compositionally biased toward polar residues. Composition is skewed to low complexity over residues 710–730 (VRSG…ASGS) and 784–809 (AGAP…ASTS). A compositionally biased stretch (polar residues) spans 810-832 (VPEPTKSSESSVDPQSDVSFSNP). Over residues 859–870 (TLASESTSSEAT) the composition is skewed to low complexity. The span at 873 to 883 (HDTTSSSSAET) shows a compositional bias: polar residues. Residues 903–914 (PEKEKEKIDRPK) are compositionally biased toward basic and acidic residues. Low complexity-rich tracts occupy residues 916-943 (PKSS…NQAI), 952-962 (SASTSSSAAST), and 970-986 (LLAE…QQQA). Residues 987-998 (IGSTSKNGGSTK) are compositionally biased toward polar residues.

Its subcellular location is the nucleus. The protein localises to the cytoplasm. It localises to the cell projection. The protein resides in the axon. Its function is as follows. Nuclear factor that influences the activity of genes involved in vulval development. This is Protein sumv-1 from Caenorhabditis elegans.